Reading from the N-terminus, the 84-residue chain is uncharacterized protein (84 aa).

Belongs to the csb family.

This is an uncharacterized protein from Dictyostelium discoideum (Social amoeba).